We begin with the raw amino-acid sequence, 651 residues long: MASATLGSSSSSASPAVAELCQNTPETFLEASKLLLTYADNILRNPSDEKYRSIRIGNTAFSTRLLPVRGAVECLFEMGFEEGETHLIFPKKASVEQLQKIRDLIAVERRSRLDGSSQKVEFSQHPAAVRLPAEQPEDPTGLMQHSGNQPGQPLSLPSAPLVVGDSTIFKVLQSNIQHVQLYENPVLQEKALACIPVNELKRKSQEKLFRARKLDKGTKVSDEDFLLLELLHWFKEEFFHWVNNVVCSRCGRETRSRDEALPPNDDELKWGAKNVEDHYCDACQLSNRFPRYNNPEKLLETRCGRCGEWANCFTLCCRALGFEARYVWDYTDHVWTEVYSPSQQRWLHCDACEDVCDKPLLYEIGWGKKLSYIIAFSKDEVVDVTWRYSCKHEEVMSRRTKVKEELLRETINGLNKQRQLLLSESRRKELLQRIIVELVEFISPKTPRPGELGGRVSGSLAWRVARGETCLERKEILFIPSENEKISKQFHLRYDIVRDRYIRVSDNNANISGWENGVWKMESIFRKVEKDWNMVYLARKEGSSFAYISWKFECGSAGLKVDNVSIRTSSQSFETGSVRWKLRSEMAQVNLLGDRNLRSYDDFCGATEVTLEAELSRGDGDVAWQHTQLFRQSLNDHAENGLEIIITFSDL.

Ala-2 bears the N-acetylalanine mark. Residues 30–91 form the PUB domain; that stretch reads EASKLLLTYA…EGETHLIFPK (62 aa). A disordered region spans residues 116–153; it reads SSQKVEFSQHPAAVRLPAEQPEDPTGLMQHSGNQPGQP. The segment covering 143 to 152 has biased composition (polar residues); that stretch reads MQHSGNQPGQ. 4 residues coordinate Zn(2+): Cys-247, Cys-250, Cys-280, and Cys-283. Cys-306 acts as the Nucleophile in catalysis. Residues His-333 and Asp-350 contribute to the active site. A PAW domain is found at 451–651; the sequence is ELGGRVSGSL…LEIIITFSDL (201 aa).

It belongs to the transglutaminase-like superfamily. PNGase family. Component of a complex required to couple retrotranslocation, ubiquitination and deglycosylation composed of NGLY1, SAKS1, AMFR, VCP and RAD23B. Interacts with the proteasome components RAD23B and PSMC1. Interacts with directly with VCP. Interacts with DERL1, bringing it close to the endoplasmic reticulum membrane. Interacts with SAKS1. Zn(2+) serves as cofactor.

It is found in the cytoplasm. It carries out the reaction Hydrolysis of an N(4)-(acetyl-beta-D-glucosaminyl)asparagine residue in which the glucosamine residue may be further glycosylated, to yield a (substituted) N-acetyl-beta-D-glucosaminylamine and a peptide containing an aspartate residue.. Inhibited by Z-VAD-fmk, a well-known caspase inhibitor, which inhibits enzyme activity through covalent binding of the carbohydrate to the single Cys-306 residue. Its function is as follows. Specifically deglycosylates the denatured form of N-linked glycoproteins in the cytoplasm and assists their proteasome-mediated degradation. Cleaves the beta-aspartyl-glucosamine (GlcNAc) of the glycan and the amide side chain of Asn, converting Asn to Asp. Prefers proteins containing high-mannose over those bearing complex type oligosaccharides. Can recognize misfolded proteins in the endoplasmic reticulum that are exported to the cytosol to be destroyed and deglycosylate them, while it has no activity toward native proteins. Deglycosylation is a prerequisite for subsequent proteasome-mediated degradation of some, but not all, misfolded glycoproteins. This is Peptide-N(4)-(N-acetyl-beta-glucosaminyl)asparagine amidase (Ngly1) from Rattus norvegicus (Rat).